Reading from the N-terminus, the 121-residue chain is uncharacterized protein (121 aa).

The segment at 101 to 121 (TVVKKEDVRESPVDTFMENAT) is disordered. A compositionally biased stretch (basic and acidic residues) spans 102–112 (VVKKEDVRESP).

This is an uncharacterized protein from Schizosaccharomyces pombe (strain 972 / ATCC 24843) (Fission yeast).